Consider the following 158-residue polypeptide: 2-C-methyl-D-erythritol 2,4-cyclodiphosphate synthase (158 aa).

A divalent metal cation is bound by residues Asp9 and His11. 4-CDP-2-C-methyl-D-erythritol 2-phosphate-binding positions include 9-11 and 35-36; these read DVH and HS. His43 provides a ligand contact to a divalent metal cation. 4-CDP-2-C-methyl-D-erythritol 2-phosphate is bound by residues 57–59, 62–66, 101–107, 133–136, Phe140, and Arg143; these read DIG, FPDTD, AQAPKMA, and TTTE.

Belongs to the IspF family. As to quaternary structure, homotrimer. A divalent metal cation is required as a cofactor.

The enzyme catalyses 4-CDP-2-C-methyl-D-erythritol 2-phosphate = 2-C-methyl-D-erythritol 2,4-cyclic diphosphate + CMP. It functions in the pathway isoprenoid biosynthesis; isopentenyl diphosphate biosynthesis via DXP pathway; isopentenyl diphosphate from 1-deoxy-D-xylulose 5-phosphate: step 4/6. Functionally, involved in the biosynthesis of isopentenyl diphosphate (IPP) and dimethylallyl diphosphate (DMAPP), two major building blocks of isoprenoid compounds. Catalyzes the conversion of 4-diphosphocytidyl-2-C-methyl-D-erythritol 2-phosphate (CDP-ME2P) to 2-C-methyl-D-erythritol 2,4-cyclodiphosphate (ME-CPP) with a corresponding release of cytidine 5-monophosphate (CMP). The protein is 2-C-methyl-D-erythritol 2,4-cyclodiphosphate synthase of Vibrio vulnificus (strain YJ016).